A 166-amino-acid chain; its full sequence is Putative transmembrane protein ORF166 (166 aa).

A run of 3 helical transmembrane segments spans residues I35–L55, P60–A80, and I124–N144.

The protein localises to the host membrane. The polypeptide is Putative transmembrane protein ORF166 (Acidianus convivator (ABV)).